The primary structure comprises 433 residues: N-lysine methyltransferase SMYD2 (433 aa).

The SET domain maps to 7 to 241 (GGLERFCSAG…PGDEVFTSYI (235 aa)). 17–19 (KGR) contacts S-adenosyl-L-methionine. Zn(2+) contacts are provided by Cys-52, Cys-55, Cys-65, Cys-68, Cys-74, Cys-78, His-86, and Cys-90. The MYND-type zinc finger occupies 52–90 (CECCFARKEGLSKCGRCKQAFYCDVECQKEDWPLHKLEC). S-adenosyl-L-methionine contacts are provided by residues His-137, 206–207 (NH), and 258–260 (YFF). A Phosphoserine modification is found at Ser-283.

It belongs to the class V-like SAM-binding methyltransferase superfamily. As to quaternary structure, interacts (via MYND-type zinc finger) with EPB41L3. Interacts (via SET domain) with p53/TP53. Interacts with RB1 and HSP90AA1. Interacts with RNA polymerase II and HELZ. Interacts with SIN3A and HDAC1. In terms of tissue distribution, highly expressed in heart, skeletal muscle and brain tissue. During cardiac development, it is differentially expressed with highest expression in the neonatal heart while very low expression is detected at 12.5 dpc and adult. Specifically expressed in cardiomyocytes (at protein level).

The protein resides in the cytoplasm. The protein localises to the cytosol. Its subcellular location is the nucleus. It carries out the reaction L-lysyl(4)-[histone H3] + 3 S-adenosyl-L-methionine = N(6),N(6),N(6)-trimethyl-L-lysyl(4)-[histone H3] + 3 S-adenosyl-L-homocysteine + 3 H(+). The catalysed reaction is L-lysyl-[protein] + S-adenosyl-L-methionine = N(6)-methyl-L-lysyl-[protein] + S-adenosyl-L-homocysteine + H(+). Its function is as follows. Protein-lysine N-methyltransferase that methylates both histones and non-histone proteins, including p53/TP53 and RB1. Specifically trimethylates histone H3 'Lys-4' (H3K4me3) in vivo. The activity requires interaction with HSP90alpha. Shows even higher methyltransferase activity on p53/TP53. Monomethylates 'Lys-370' of p53/TP53, leading to decreased DNA-binding activity and subsequent transcriptional regulation activity of p53/TP53. Monomethylates RB1 at 'Lys-860'. The polypeptide is N-lysine methyltransferase SMYD2 (Smyd2) (Mus musculus (Mouse)).